The sequence spans 372 residues: G patch domain and ankyrin repeat-containing protein 1 (372 aa).

A disordered region spans residues 74-110; sequence DSSSSKPQRAEPMRERKKKRRRVTREPAAAGVPRQGR. ANK repeat units lie at residues 124 to 155 and 156 to 186; these read LAAQNGDLTELRRLLEPQEAGGAGGNINARDA and FWWTPLMCAARAGQGAAVRYLLGRGAAWVGV. 2 disordered regions span residues 211–233 and 251–271; these read RESHGETRSPENQNRSTPSSSQF and AHLLSLSRRPQPSNLPLGVPT. A compositionally biased stretch (polar residues) spans 220–233; it reads PENQNRSTPSSSQF. Positions 271-317 constitute a G-patch domain; that stretch reads TSSPGFRLLLRGGWEPGMGLGPRGEGRANPIPTILKRDQEGLGYRSP. K306 is covalently cross-linked (Glycyl lysine isopeptide (Lys-Gly) (interchain with G-Cter in SUMO2)). Composition is skewed to basic and acidic residues over residues 330–340 and 348–357; these read TRAVSGRERVP and RENRRQEEKG. The disordered stretch occupies residues 330 to 357; it reads TRAVSGRERVPRVATLSQRENRRQEEKG.

The protein is G patch domain and ankyrin repeat-containing protein 1 (Gpank1) of Mus musculus (Mouse).